Reading from the N-terminus, the 653-residue chain is Protein fem-1 homolog A (653 aa).

ANK repeat units lie at residues 2–31, 40–70, 82–111, 115–145, 149–178, 182–211, and 214–243; these read DLHT…REEL, SGGT…SVEA, EGAP…SVNR, TNST…DLEV, HGHT…QVNR, KGNT…RMER, and YGMT…AGDE. Residue Ser-108 is modified to Phosphoserine. Positions 242–274 are disordered; sequence DEQAQPGLARVQPQGARSSPEEPPSGESYESCC. 2 TPR repeats span residues 282 to 316 and 374 to 407; these read VEAL…RHQG and SYYI…QQNN. ANK repeat units follow at residues 518-560 and 564-593; these read NGFT…DPDS and DNNT…HMDA.

It belongs to the fem-1 family. In terms of assembly, component of a CRL2 E3 ubiquitin-protein ligase complex, also named ECS (Elongin BC-CUL2/5-SOCS-box protein) complex, composed of CUL2, Elongin BC (ELOB and ELOC), RBX1 and substrate-specific adapter FEM1A. Interacts with PTGER4. Interacts with NFKB1; the interaction is direct. Phosphorylated; highly phosphorylated in myoblasts and myotubes. Phosphorylation at Ser-108 promotes PGE2-EP4-mediated inhibition of inflammation. Dephosphorylated by protein phosphatase 2A (PP2A).

The protein localises to the mitochondrion. The protein resides in the cytoplasm. It functions in the pathway protein modification; protein ubiquitination. In terms of biological role, substrate-recognition component of a Cul2-RING (CRL2) E3 ubiquitin-protein ligase complex of the DesCEND (destruction via C-end degrons) pathway, which recognizes a C-degron located at the extreme C terminus of target proteins, leading to their ubiquitination and degradation. The C-degron recognized by the DesCEND pathway is usually a motif of less than ten residues and can be present in full-length proteins, truncated proteins or proteolytically cleaved forms. The CRL2(FEM1A) complex specifically recognizes proteins with an arginine at the C-terminus: recognizes and binds proteins ending with -Lys/Arg-Xaa-Arg and -Lys/Arg-Xaa-Xaa-Arg C-degrons, such as SIL1 or OR51B2, leading to their ubiquitination and degradation. Involved in PGE2-EP4-mediated inhibition of inflammation of macrophages via interaction with NFKB1 and PTGER4. Promotes inflammation in brain microglia through MAP2K4/MKK4-mediated signaling. This chain is Protein fem-1 homolog A, found in Bos taurus (Bovine).